Consider the following 325-residue polypeptide: NADH-ubiquinone oxidoreductase chain 1 (325 aa).

The next 8 membrane-spanning stretches (helical) occupy residues 5–25 (VPAE…FLVL), 79–99 (VATF…YGMV), 105–125 (IGLL…IIAG), 144–164 (MVPY…CVGS), 177–197 (IWSG…RLAE), 237–257 (ILMS…ILDL), 263–283 (IPGS…YIWV), and 302–322 (VFLP…VTFQ).

It belongs to the complex I subunit 1 family.

The protein localises to the mitochondrion inner membrane. It catalyses the reaction a ubiquinone + NADH + 5 H(+)(in) = a ubiquinol + NAD(+) + 4 H(+)(out). Core subunit of the mitochondrial membrane respiratory chain NADH dehydrogenase (Complex I) that is believed to belong to the minimal assembly required for catalysis. Complex I functions in the transfer of electrons from NADH to the respiratory chain. The immediate electron acceptor for the enzyme is believed to be ubiquinone. The sequence is that of NADH-ubiquinone oxidoreductase chain 1 (ND1) from Petunia hybrida (Petunia).